A 294-amino-acid chain; its full sequence is Large ribosomal subunit protein uL2 (294 aa).

2 disordered regions span residues 1–37 (MGIR…RPEK) and 228–294 (GSVM…RAAQ). The span at 10–22 (TPSTRHMTVSNFE) shows a compositional bias: polar residues. Positions 23–37 (ELSRDENGKRPRPEK) are enriched in basic and acidic residues. Over residues 264–285 (KTRKRNKPSNKFIVRGRRRGGR) the composition is skewed to basic residues.

This sequence belongs to the universal ribosomal protein uL2 family. As to quaternary structure, part of the 50S ribosomal subunit. Forms a bridge to the 30S subunit in the 70S ribosome.

In terms of biological role, one of the primary rRNA binding proteins. Required for association of the 30S and 50S subunits to form the 70S ribosome, for tRNA binding and peptide bond formation. It has been suggested to have peptidyltransferase activity; this is somewhat controversial. Makes several contacts with the 16S rRNA in the 70S ribosome. The sequence is that of Large ribosomal subunit protein uL2 from Synechococcus sp. (strain JA-3-3Ab) (Cyanobacteria bacterium Yellowstone A-Prime).